We begin with the raw amino-acid sequence, 155 residues long: uncharacterized protein (155 aa).

A signal peptide spans 1–23 (MKIRSLSRFVLASTMFASFTASA).

This sequence to E.coli YkfB.

This is an uncharacterized protein from Escherichia coli (strain K12).